We begin with the raw amino-acid sequence, 296 residues long: Phosphatidylglycerol--prolipoprotein diacylglyceryl transferase (296 aa).

3 helical membrane passes run 17-37 (LAVR…IVVG), 59-79 (MMFY…VLFY), and 97-117 (GGMS…LFAW). Arginine 142 contacts a 1,2-diacyl-sn-glycero-3-phospho-(1'-sn-glycerol). The next 2 membrane-spanning stretches (helical) occupy residues 230–250 (MGAI…TVEF) and 265–285 (LSMG…MMIW).

Belongs to the Lgt family.

The protein localises to the cell inner membrane. The catalysed reaction is L-cysteinyl-[prolipoprotein] + a 1,2-diacyl-sn-glycero-3-phospho-(1'-sn-glycerol) = an S-1,2-diacyl-sn-glyceryl-L-cysteinyl-[prolipoprotein] + sn-glycerol 1-phosphate + H(+). It functions in the pathway protein modification; lipoprotein biosynthesis (diacylglyceryl transfer). Catalyzes the transfer of the diacylglyceryl group from phosphatidylglycerol to the sulfhydryl group of the N-terminal cysteine of a prolipoprotein, the first step in the formation of mature lipoproteins. The protein is Phosphatidylglycerol--prolipoprotein diacylglyceryl transferase of Burkholderia thailandensis (strain ATCC 700388 / DSM 13276 / CCUG 48851 / CIP 106301 / E264).